A 436-amino-acid chain; its full sequence is MKRREFGALAAGALAMGLPFRAFADETCQSPYMPKITGQEEFVYVWTLGVEGMGDEQDKLVTIDLRPGSATRGQVINSVSVGGRNEAHHGGFSADRRFFWTGGLDTNRIFIFDVHSDPSNPKLHKTIDTFVKDSGGVVGPHTFFALPGSMMITGLSNDDDHGGRTALVEYNDDGEYVATYWMPTADDMQGAVAVGDAVADGYGYDIRALIRKNVMLTSSFTGWSNYMMDFGQMLQDAEAMKRFGNTIVQWDLHTRQPKKVFNVPGAPLEIRFPWGSNANYAFSTTALTSQLWLIYEDDAGEWQAKAVADIGNPADIPLPVDISIAADDQTLWINSFMDGKTRLFDISDPHKPFQIYEKVIDRQVNMVSQSWDGKRVYFSSSLLANWDKKGKDDAQYLKAYNWDGKELVEDFAVDFYELGLGRAHIMRFGSSALYSS.

Positions 1-24 (MKRREFGALAAGALAMGLPFRAFA) are cleaved as a signal peptide.

This sequence belongs to the selenium-binding protein family.

It localises to the periplasm. It carries out the reaction methanethiol + O2 + H2O = hydrogen sulfide + formaldehyde + H2O2 + H(+). It participates in organosulfur degradation. Its function is as follows. Catalyzes the oxidation of methanethiol. This chain is Methanethiol oxidase, found in Ruegeria pomeroyi (strain ATCC 700808 / DSM 15171 / DSS-3) (Silicibacter pomeroyi).